We begin with the raw amino-acid sequence, 103 residues long: G0/G1 switch protein 2 (103 aa).

Residues 80–103 (LQEKGKQQDTVLGGRALSNRQHAS) form a disordered region.

In terms of assembly, directly interacts with BCL2; this interaction prevents the formation of the anti-apoptotic BAX-BCL2 complex. As to expression, widely expressed with highest levels in peripheral blood, skeletal muscle and heart, followed by kidney and liver.

Its subcellular location is the mitochondrion. In terms of biological role, promotes apoptosis by binding to BCL2, hence preventing the formation of protective BCL2-BAX heterodimers. This chain is G0/G1 switch protein 2 (G0S2), found in Homo sapiens (Human).